A 342-amino-acid chain; its full sequence is Hydrogenase expression/formation protein HupV (342 aa).

The protein belongs to the HupK family.

The sequence is that of Hydrogenase expression/formation protein HupV (hupV) from Azotobacter chroococcum mcd 1.